Reading from the N-terminus, the 161-residue chain is Nucleotide-binding protein Tcr_1902 (161 aa).

It belongs to the YajQ family.

In terms of biological role, nucleotide-binding protein. The protein is Nucleotide-binding protein Tcr_1902 of Hydrogenovibrio crunogenus (strain DSM 25203 / XCL-2) (Thiomicrospira crunogena).